The primary structure comprises 132 residues: MHGILSPGAWAFIAYVLGAVALCLVMLGLGRVLGGRSHGRAKNLPFESGVDSTGSARLRFPVKYALVAMLFVIFGIEMPFLYLWAVSVRENGWAGFVEVALFVSLLLAGLFYLHRVGALDWSPERRRRKPRD.

3 consecutive transmembrane segments (helical) span residues alanine 9 to leucine 29, leucine 66 to valine 86, and tryptophan 93 to leucine 113.

Belongs to the complex I subunit 3 family. In terms of assembly, NDH-1 is composed of 13 different subunits. Subunits NuoA, H, J, K, L, M, N constitute the membrane sector of the complex.

The protein resides in the cell inner membrane. The catalysed reaction is a quinone + NADH + 5 H(+)(in) = a quinol + NAD(+) + 4 H(+)(out). Its function is as follows. NDH-1 shuttles electrons from NADH, via FMN and iron-sulfur (Fe-S) centers, to quinones in the respiratory chain. The immediate electron acceptor for the enzyme in this species is believed to be ubiquinone. Couples the redox reaction to proton translocation (for every two electrons transferred, four hydrogen ions are translocated across the cytoplasmic membrane), and thus conserves the redox energy in a proton gradient. In Pseudomonas paraeruginosa (strain DSM 24068 / PA7) (Pseudomonas aeruginosa (strain PA7)), this protein is NADH-quinone oxidoreductase subunit A 2.